We begin with the raw amino-acid sequence, 310 residues long: Methionyl-tRNA formyltransferase (310 aa).

109–112 contacts (6S)-5,6,7,8-tetrahydrofolate; the sequence is SLLP.

This sequence belongs to the Fmt family.

The enzyme catalyses L-methionyl-tRNA(fMet) + (6R)-10-formyltetrahydrofolate = N-formyl-L-methionyl-tRNA(fMet) + (6S)-5,6,7,8-tetrahydrofolate + H(+). Attaches a formyl group to the free amino group of methionyl-tRNA(fMet). The formyl group appears to play a dual role in the initiator identity of N-formylmethionyl-tRNA by promoting its recognition by IF2 and preventing the misappropriation of this tRNA by the elongation apparatus. The polypeptide is Methionyl-tRNA formyltransferase (Staphylococcus epidermidis (strain ATCC 35984 / DSM 28319 / BCRC 17069 / CCUG 31568 / BM 3577 / RP62A)).